The following is a 456-amino-acid chain: Adenylosuccinate synthetase isozyme 2 (456 aa).

The segment covering 1-14 (MSISESSPAATSLP) has biased composition (polar residues). The disordered stretch occupies residues 1-24 (MSISESSPAATSLPNGDCGRPRAR). Residues 39-45 (GDEGKGK) and 67-69 (GHT) contribute to the GTP site. The active-site Proton acceptor is the D40. Positions 40 and 67 each coordinate Mg(2+). D40 provides a ligand contact to substrate. IMP contacts are provided by residues 40–43 (DEGK), 65–68 (NAGH), T162, R176, N255, T270, and R334. Residue H68 is the Proton donor of the active site. 330-336 (VTTGRKR) provides a ligand contact to substrate. GTP contacts are provided by residues R336, 362 to 364 (KLD), and 444 to 447 (GVGK).

This sequence belongs to the adenylosuccinate synthetase family. In terms of assembly, homodimer. Requires Mg(2+) as cofactor.

Its subcellular location is the cytoplasm. It is found in the mitochondrion. It catalyses the reaction IMP + L-aspartate + GTP = N(6)-(1,2-dicarboxyethyl)-AMP + GDP + phosphate + 2 H(+). Its pathway is purine metabolism; AMP biosynthesis via de novo pathway; AMP from IMP: step 1/2. With respect to regulation, inhibited competitively by AMP and IMP and non-competitively by fructose 1,6-bisphosphate. Its function is as follows. Plays an important role in the de novo pathway and in the salvage pathway of purine nucleotide biosynthesis. Catalyzes the first committed step in the biosynthesis of AMP from IMP. The polypeptide is Adenylosuccinate synthetase isozyme 2 (Adss2) (Mus musculus (Mouse)).